The following is a 439-amino-acid chain: AP-2 complex subunit mu (439 aa).

The MHD domain occupies 172 to 438 (RNELYIDVVE…LTKAGTYQNR (267 aa)).

The protein belongs to the adaptor complexes medium subunit family. Adaptor protein complex 2 (AP-2) is a heterotetramer composed of two large adaptins (alpha-type and beta-type subunits), a medium adaptin (mu-type subunit AP50) and a small adaptin (sigma-type subunit AP17). Post-translationally, phosphorylated.

It localises to the cell membrane. The protein localises to the membrane. Its subcellular location is the coated pit. Its function is as follows. Component of the adaptor complexes which link clathrin to receptors in coated vesicles. Clathrin-associated protein complexes are believed to interact with the cytoplasmic tails of membrane proteins, leading to their selection and concentration. AP50 is a subunit of the plasma membrane adaptor. This Dictyostelium discoideum (Social amoeba) protein is AP-2 complex subunit mu (apm2).